Reading from the N-terminus, the 350-residue chain is Nicotinate-nucleotide--dimethylbenzimidazole phosphoribosyltransferase (350 aa).

Glutamate 317 functions as the Proton acceptor in the catalytic mechanism.

This sequence belongs to the CobT family.

The enzyme catalyses 5,6-dimethylbenzimidazole + nicotinate beta-D-ribonucleotide = alpha-ribazole 5'-phosphate + nicotinate + H(+). The protein operates within nucleoside biosynthesis; alpha-ribazole biosynthesis; alpha-ribazole from 5,6-dimethylbenzimidazole: step 1/2. Functionally, catalyzes the synthesis of alpha-ribazole-5'-phosphate from nicotinate mononucleotide (NAMN) and 5,6-dimethylbenzimidazole (DMB). The chain is Nicotinate-nucleotide--dimethylbenzimidazole phosphoribosyltransferase from Shewanella putrefaciens (strain CN-32 / ATCC BAA-453).